The primary structure comprises 288 residues: Energy-coupling factor transporter ATP-binding protein EcfA2 (288 aa).

The region spanning Ile3–Ala245 is the ABC transporter domain. Gly40–Ser47 serves as a coordination point for ATP.

The protein belongs to the ABC transporter superfamily. Energy-coupling factor EcfA family. In terms of assembly, forms a stable energy-coupling factor (ECF) transporter complex composed of 2 membrane-embedded substrate-binding proteins (S component), 2 ATP-binding proteins (A component) and 2 transmembrane proteins (T component).

The protein resides in the cell membrane. Its function is as follows. ATP-binding (A) component of a common energy-coupling factor (ECF) ABC-transporter complex. Unlike classic ABC transporters this ECF transporter provides the energy necessary to transport a number of different substrates. This Clostridium tetani (strain Massachusetts / E88) protein is Energy-coupling factor transporter ATP-binding protein EcfA2.